Consider the following 225-residue polypeptide: Helicostatins (225 aa).

The N-terminal stretch at 1-18 (MLYSSLPVCFLVLGAALC) is a signal peptide. The propeptide occupies 19-48 (APERMQNEAEPHDLQPHEAEPHSDHVAPLA). L58, L79, and L90 each carry leucine amide. A propeptide spanning residues 94–127 (SVDEDQSNDEQQLTTSDLDQAALAELFDQYDDAE) is cleaved from the precursor. L137 bears the Leucine amide mark. Positions 141–149 (FADDETSEE) are excised as a propeptide. 5 positions are modified to leucine amide: L159, L170, L181, L192, and L206. Positions 205–225 (GLGKRSGDDVSADDSDNYFDV) are disordered. A propeptide spanning residues 210 to 225 (SGDDVSADDSDNYFDV) is cleaved from the precursor. The span at 214–225 (VSADDSDNYFDV) shows a compositional bias: acidic residues.

It belongs to the allatostatin family. In terms of tissue distribution, highly expressed in the CNS and gut of larvae. Also expressed in the cells of the larval brain and ventral nerve cord and in endocrine cells of the midgut.

The protein localises to the secreted. In terms of biological role, may act as a neurotransmitter or neuromodulator. This Helicoverpa armigera (Cotton bollworm) protein is Helicostatins.